We begin with the raw amino-acid sequence, 598 residues long: Aspartate--tRNA(Asp/Asn) ligase (598 aa).

E173 lines the L-aspartate pocket. Positions 197–200 are aspartate; it reads QLFK. Residue R219 participates in L-aspartate binding. ATP contacts are provided by residues 219-221 and Q228; that span reads RDE. H448 is an L-aspartate binding site. E482 serves as a coordination point for ATP. R489 is an L-aspartate binding site. 534 to 537 provides a ligand contact to ATP; it reads GWDR. Residues 560-598 form a disordered region; it reads GYDPLTAAPAPITAQQRKEAGVDAKPETKKAAAGEPAGA. Over residues 575–591 the composition is skewed to basic and acidic residues; the sequence is QRKEAGVDAKPETKKAA.

The protein belongs to the class-II aminoacyl-tRNA synthetase family. Type 1 subfamily. Homodimer.

The protein resides in the cytoplasm. It carries out the reaction tRNA(Asx) + L-aspartate + ATP = L-aspartyl-tRNA(Asx) + AMP + diphosphate. In terms of biological role, aspartyl-tRNA synthetase with relaxed tRNA specificity since it is able to aspartylate not only its cognate tRNA(Asp) but also tRNA(Asn). Reaction proceeds in two steps: L-aspartate is first activated by ATP to form Asp-AMP and then transferred to the acceptor end of tRNA(Asp/Asn). This Kineococcus radiotolerans (strain ATCC BAA-149 / DSM 14245 / SRS30216) protein is Aspartate--tRNA(Asp/Asn) ligase.